The following is a 401-amino-acid chain: Tryptophan synthase beta chain (401 aa).

At Lys92 the chain carries N6-(pyridoxal phosphate)lysine.

This sequence belongs to the TrpB family. Tetramer of two alpha and two beta chains. The cofactor is pyridoxal 5'-phosphate.

It catalyses the reaction (1S,2R)-1-C-(indol-3-yl)glycerol 3-phosphate + L-serine = D-glyceraldehyde 3-phosphate + L-tryptophan + H2O. It functions in the pathway amino-acid biosynthesis; L-tryptophan biosynthesis; L-tryptophan from chorismate: step 5/5. The beta subunit is responsible for the synthesis of L-tryptophan from indole and L-serine. The chain is Tryptophan synthase beta chain from Ruthia magnifica subsp. Calyptogena magnifica.